A 200-amino-acid polypeptide reads, in one-letter code: Pyridoxal 5'-phosphate synthase subunit PdxT (200 aa).

52–54 (GES) is a binding site for L-glutamine. The Nucleophile role is filled by Cys-84. L-glutamine contacts are provided by residues Arg-116 and 145–146 (IR). Residues His-181 and Glu-183 each act as charge relay system in the active site.

The protein belongs to the glutaminase PdxT/SNO family. In terms of assembly, in the presence of PdxS, forms a dodecamer of heterodimers. Only shows activity in the heterodimer.

The enzyme catalyses aldehydo-D-ribose 5-phosphate + D-glyceraldehyde 3-phosphate + L-glutamine = pyridoxal 5'-phosphate + L-glutamate + phosphate + 3 H2O + H(+). The catalysed reaction is L-glutamine + H2O = L-glutamate + NH4(+). It participates in cofactor biosynthesis; pyridoxal 5'-phosphate biosynthesis. Its function is as follows. Catalyzes the hydrolysis of glutamine to glutamate and ammonia as part of the biosynthesis of pyridoxal 5'-phosphate. The resulting ammonia molecule is channeled to the active site of PdxS. The sequence is that of Pyridoxal 5'-phosphate synthase subunit PdxT from Sulfurisphaera tokodaii (strain DSM 16993 / JCM 10545 / NBRC 100140 / 7) (Sulfolobus tokodaii).